Reading from the N-terminus, the 324-residue chain is Beta-ketoacyl-[acyl-carrier-protein] synthase III (324 aa).

Catalysis depends on residues Cys113 and His251. Residues 252-256 are ACP-binding; sequence QANKR. Asn281 is a catalytic residue.

This sequence belongs to the thiolase-like superfamily. FabH family. Homodimer.

The protein localises to the cytoplasm. The catalysed reaction is malonyl-[ACP] + acetyl-CoA + H(+) = 3-oxobutanoyl-[ACP] + CO2 + CoA. It functions in the pathway lipid metabolism; fatty acid biosynthesis. Its function is as follows. Catalyzes the condensation reaction of fatty acid synthesis by the addition to an acyl acceptor of two carbons from malonyl-ACP. Catalyzes the first condensation reaction which initiates fatty acid synthesis and may therefore play a role in governing the total rate of fatty acid production. Possesses both acetoacetyl-ACP synthase and acetyl transacylase activities. Its substrate specificity determines the biosynthesis of branched-chain and/or straight-chain of fatty acids. The sequence is that of Beta-ketoacyl-[acyl-carrier-protein] synthase III from Bartonella bacilliformis (strain ATCC 35685 / KC583 / Herrer 020/F12,63).